A 160-amino-acid polypeptide reads, in one-letter code: Phosphopantetheine adenylyltransferase (160 aa).

Thr10 lines the substrate pocket. ATP contacts are provided by residues 10–11 and His18; that span reads TF. Lys42, Leu74, and Arg88 together coordinate substrate. Residues 89 to 91, Glu99, and 124 to 130 contribute to the ATP site; these read GLR and NSFISST.

It belongs to the bacterial CoaD family. In terms of assembly, homohexamer. Mg(2+) is required as a cofactor.

It is found in the cytoplasm. The enzyme catalyses (R)-4'-phosphopantetheine + ATP + H(+) = 3'-dephospho-CoA + diphosphate. The protein operates within cofactor biosynthesis; coenzyme A biosynthesis; CoA from (R)-pantothenate: step 4/5. Reversibly transfers an adenylyl group from ATP to 4'-phosphopantetheine, yielding dephospho-CoA (dPCoA) and pyrophosphate. The polypeptide is Phosphopantetheine adenylyltransferase (Pseudoalteromonas atlantica (strain T6c / ATCC BAA-1087)).